The following is a 206-amino-acid chain: FKBP-type 22 kDa peptidyl-prolyl cis-trans isomerase (206 aa).

A PPIase FKBP-type domain is found at 120–206 (TDRVRVHYTG…VFEVELLEIL (87 aa)).

In terms of assembly, homodimer.

It is found in the cytoplasm. Its subcellular location is the periplasm. The catalysed reaction is [protein]-peptidylproline (omega=180) = [protein]-peptidylproline (omega=0). Strongly inhibited by FK506. Its function is as follows. PPIases accelerate the folding of proteins. Catalyzes the cis-trans isomerization of proline imidic peptide bonds in oligopeptides. Displays a preference for substrates with a lysyl residue in the P1 position. The polypeptide is FKBP-type 22 kDa peptidyl-prolyl cis-trans isomerase (fklB) (Escherichia coli (strain K12)).